Here is an 88-residue protein sequence, read N- to C-terminus: uncharacterized protein (88 aa).

2 consecutive transmembrane segments (helical) span residues 5–25 and 36–56; these read AIPF…LLFV and CYYL…VMIF.

The protein localises to the membrane. This is an uncharacterized protein from Saccharomyces cerevisiae (strain ATCC 204508 / S288c) (Baker's yeast).